An 875-amino-acid polypeptide reads, in one-letter code: MGEVVRLTNSSTGGPVFVYVKDGKIIRMTPMDFDDAVDAPSWKIEARGKTFTPPRKTSIAPYTAGFKSMIYSDLRIPYPMKRKSFDPNGERNPQLRGAGLSKQDPWSDYERISWDEATDIVVAEINRIKHAYGPSAILSTPSSHHMWGNVGYRHSTYFRFMNMMGFTYADHNPDSWEGWHWGGMHMWGFSWRLGNPEQYDLLEDGLKHAEMIVFWSSDPETNSGIYAGFESNIRRQWLKDLGVDFVFIDPHMNHTARLVADKWFSPKIGTDHALSFAIAYTWLKEDSYDKEYVAANAHGFEEWADYVLGKTDGTPKTCEWAEEESGVPACEIRALARQWAKKNTYLAAGGLGGWGGACRASHGIEWARGMIALATMQGMGKPGSNMWSTTQGVPLDYEFYFPGYAEGGISGDCENSAAGFKFAWRMFDGKTTFPSPSNLNTSAGQHIPRLKIPECIMGGKFQWSGKGFAGGDISHQLHQYEYPAPGYSKIKMFWKYGGPHLGTMTATNRYAKMYTHDSLEFVVSQSIWFEGEVPFADIILPACTNFERWDISEFANCSGYIPDNYQLCNHRVISLQAKCIEPVGESMSDYEIYRLFAKKLNIEEMFSEGKDELAWCEQYFNATDMPKYMTWDEFFKKGYFVVPDNPNRKKTVALRWFAEGREKDTPDWGPRLNNQVCRKGLQTTTGKVEFIATSLKNFEEQGYIDEHRPSMHTYVPAWESQKHSPLAVKYPLGMLSPHPRFSMHTMGDGKNSYMNYIKDHRVEVDGYKYWIMRVNSIDAEARGIKNGDLIRAYNDRGSVILAAQVTECLQPGTVHSYESCAVYDPLGTAGKSADRGGCINILTPDRYISKYACGMANNTALVEIEKWDGDKYEIY.

Residues 82–104 (RKSFDPNGERNPQLRGAGLSKQD) are disordered. Ser-175 provides a ligand contact to Mo-bis(molybdopterin guanine dinucleotide).

It belongs to the prokaryotic molybdopterin-containing oxidoreductase family. Heterodimer of a large and a small subunit. Mo-bis(molybdopterin guanine dinucleotide) serves as cofactor.

The enzyme catalyses 1,2,3,5-tetrahydroxybenzene + 1,2,3-trihydroxybenzene = 1,2,3,5-tetrahydroxybenzene + 1,3,5-trihydroxybenzene. In terms of biological role, isomerization of pyrogallol to phloroglucin. The chain is Pyrogallol hydroxytransferase large subunit (athL) from Pelobacter acidigallici.